A 741-amino-acid polypeptide reads, in one-letter code: MDVVSTDVNNVLPDEIMETGISLVDDDSIEAITISSPMVDEAPMETELERIVEVSSSGECVSTAVVKEAVASTSNNAGHLAVVSVASKPESGPSAAAMKTVLQTHFHKLATPISGQVVLNKVSQASDLTAGSHVVKQEGQKLIVTTLGKSSHPIVLTLPQSHIGNAQTPVTHVQRIESKVTPQQIKLVTIGGNRSDGNPVLGMSALTSAQIISPSTKSPVLQTQQIKTLQIAKKAPTSSGPVITKLIIAKPLNSKPLTEQTTQIASSFAGGPALSQTNPGTPPKALNIADIGVIGTPSAKTTNKIAISPLKSPSKGVKSSVGGINTPQFKTIIPLAAAPNVQQIQVPGSKFHYVRLVTASTASNTTPSSQIQSTSTQPLQQAKPVVVNATPVRMSVPIIPAQTVKQVVPKPLNAASQIVTTSQPQQRLLMPATPLAQIQPSLTNLPAGTVLASAPGTGNVGYAVLPAQYVTQLQQSSYVSIASNAGLSGTTAAQNQPRGPLNGIISSESASRPRKPCNCTKSLCLKLYCDCFANGEFCNNCNCTNCYNNLEHENERQKAIKACLDRNPEAFKPKIGKGKEGESDRRHSKGCNCKRSGCLKNYCECYEAKIMCSSICKCIGCKNFEESPERKTLMHLADAAEVRVQQQTAAKTKLSSQISDLLTRPAPPMNSGGGKLPFTFVTKEVAEATCECLLAQAEQAEKQLKSKAATERMILEEFGRCLMRVINSAGKAKTDPCPMSC.

The 114-residue stretch at 513–626 (PRKPCNCTKS…KCIGCKNFEE (114 aa)) folds into the CRC domain. The tract at residues 515 to 528 (KPCNCTKSLCLKLY) is DNA-binding. Cys-517, Cys-519, Cys-524, Cys-529, Cys-531, Cys-538, Cys-541, Cys-543, and Cys-546 together coordinate Zn(2+). A linker region spans residues 575-588 (IGKGKEGESDRRHS). Zn(2+) is bound by residues Cys-591, Cys-593, Cys-598, Cys-603, Cys-605, Cys-612, Cys-616, Cys-618, and Cys-621. The interval 591 to 604 (CNCKRSGCLKNYCE) is DNA-binding.

The protein belongs to the lin-54 family. As to quaternary structure, component of the DREAM complex.

Its subcellular location is the nucleus. Component of the DREAM complex, a multiprotein complex that can both act as a transcription activator or repressor depending on the context. Specifically recognizes the consensus motif 5'-TTYRAA-3' in target DNA. This chain is Protein lin-54 homolog (lin54), found in Xenopus tropicalis (Western clawed frog).